A 68-amino-acid chain; its full sequence is KCNQ1 downstream neighbor protein (68 aa).

The disordered stretch occupies residues 28-68 (GVASGCSPSKASQEARGKEKCPTLNGQPQWSALFTLPPQRE).

Shows reduced expression in Wilms' tumor samples.

This is KCNQ1 downstream neighbor protein (KCNQ1DN) from Homo sapiens (Human).